Consider the following 237-residue polypeptide: Uridylate kinase (237 aa).

An ATP-binding site is contributed by 12 to 15; it reads KLSG. The involved in allosteric activation by GTP stretch occupies residues 20–25; sequence GAEGFG. Glycine 54 is a UMP binding site. ATP-binding residues include glycine 55 and arginine 59. UMP is bound by residues aspartate 74 and 135–142; that span reads TGSPFFTT. Residues threonine 162, tyrosine 168, and aspartate 171 each contribute to the ATP site.

Belongs to the UMP kinase family. Homohexamer.

It localises to the cytoplasm. The enzyme catalyses UMP + ATP = UDP + ADP. It functions in the pathway pyrimidine metabolism; CTP biosynthesis via de novo pathway; UDP from UMP (UMPK route): step 1/1. With respect to regulation, allosterically activated by GTP. Inhibited by UTP. Functionally, catalyzes the reversible phosphorylation of UMP to UDP. The sequence is that of Uridylate kinase from Actinobacillus succinogenes (strain ATCC 55618 / DSM 22257 / CCUG 43843 / 130Z).